The following is a 97-amino-acid chain: MNHNVIIVIALIIVVISMLAMLIRVVLGPSLADRVVALDAIGLQLMAVIALFSILLNIKYMIVVIMMIGILAFLGTAVFSKFMDKGKVIEHDQNHTD.

A run of 3 helical transmembrane segments spans residues 3-23 (HNVIIVIALIIVVISMLAMLI), 35-55 (VVALDAIGLQLMAVIALFSIL), and 60-80 (YMIVVIMMIGILAFLGTAVFS).

It belongs to the CPA3 antiporters (TC 2.A.63) subunit F family. As to quaternary structure, may form a heterooligomeric complex that consists of seven subunits: mnhA1, mnhB1, mnhC1, mnhD1, mnhE1, mnhF1 and mnhG1.

It localises to the cell membrane. Its function is as follows. Mnh complex is a Na(+)/H(+) antiporter involved in Na(+) excretion. This Staphylococcus aureus (strain Mu3 / ATCC 700698) protein is Na(+)/H(+) antiporter subunit F1 (mnhF1).